A 339-amino-acid polypeptide reads, in one-letter code: MSDIFSLSSYDYKLPQDLIATAPTMPKEEARLLVYDRQKDSVFHLKFKNLSEILPECAIIFNDTKVIKARIYGRKDSGAEIQMLLNQPLQNSLFSCYIRGKVKVGTKLKFDLGVEAEVLELKDDSSRIVKFKKNEQILNTSEIYNILSHIGHVPLPPYIKREDTPDDEIWYQSIFAKNEGAVAAPTASLHFNDQMLDDLNKTHDISYITLHVGAGTFKGVEHCDIREHKMHSEFYCISKKAKNIIDSDIKLLGVGTTVTRCIEYYYRTKQPKGFCDLFLHPDNKPLRQDFLLTNFHLPKSTLIMLVASFIGLEKTMEIYKQAVENRYKFYSYGDGMLII.

This sequence belongs to the QueA family. As to quaternary structure, monomer.

The protein localises to the cytoplasm. The enzyme catalyses 7-aminomethyl-7-carbaguanosine(34) in tRNA + S-adenosyl-L-methionine = epoxyqueuosine(34) in tRNA + adenine + L-methionine + 2 H(+). It functions in the pathway tRNA modification; tRNA-queuosine biosynthesis. Functionally, transfers and isomerizes the ribose moiety from AdoMet to the 7-aminomethyl group of 7-deazaguanine (preQ1-tRNA) to give epoxyqueuosine (oQ-tRNA). The protein is S-adenosylmethionine:tRNA ribosyltransferase-isomerase of Campylobacter fetus subsp. fetus (strain 82-40).